The chain runs to 433 residues: V-type ATP synthase beta chain (433 aa).

The protein belongs to the ATPase alpha/beta chains family.

Produces ATP from ADP in the presence of a proton gradient across the membrane. The V-type beta chain is a regulatory subunit. The sequence is that of V-type ATP synthase beta chain from Borrelia turicatae (strain 91E135).